A 752-amino-acid chain; its full sequence is Peptidyl-prolyl cis-trans isomerase G (752 aa).

The PPIase cyclophilin-type domain occupies Phe-11 to Glu-176. The segment covering Lys-182–Ser-193 has biased composition (basic residues). The tract at residues Lys-182–Gly-752 is disordered. Over residues Ser-194–Ser-214 the composition is skewed to low complexity. Basic residues predominate over residues Arg-226–Lys-251. A phosphoserine mark is found at Ser-252, Ser-254, Ser-255, Ser-257, and Ser-288. Positions Pro-290–Cys-308 are enriched in basic and acidic residues. Residue Ser-313 is modified to Phosphoserine. Basic residues predominate over residues Phe-327–Ser-345. Composition is skewed to basic and acidic residues over residues Arg-346–Arg-366 and Arg-377–Asn-447. Residue Ser-354 is modified to Phosphoserine. Position 356 is a phosphothreonine (Thr-356). Position 384 is a phosphoserine (Ser-384). A Glycyl lysine isopeptide (Lys-Gly) (interchain with G-Cter in SUMO2) cross-link involves residue Lys-390. Phosphoserine is present on residues Ser-395, Ser-411, and Ser-413. A compositionally biased stretch (basic residues) spans Lys-448–Ser-461. Basic and acidic residues-rich tracts occupy residues Lys-462–Lys-552 and Arg-577–Arg-598. The span at Arg-599 to Asp-625 shows a compositional bias: basic residues. A compositionally biased stretch (basic and acidic residues) spans Ser-626 to Ile-682. Ser-685 and Ser-688 each carry phosphoserine. The span at Ser-685 to Lys-705 shows a compositional bias: polar residues. Residue Lys-691 forms a Glycyl lysine isopeptide (Lys-Gly) (interchain with G-Cter in SUMO2) linkage. A phosphoserine mark is found at Ser-694, Ser-742, and Ser-743. Positions Asn-706 to Gly-752 are enriched in basic and acidic residues. Phosphothreonine is present on Thr-746. Ser-751 bears the Phosphoserine mark.

Interacts with CLK1, PNN and with the phosphorylated C-terminal domain of RNA polymerase II.

Its subcellular location is the nucleus matrix. It is found in the nucleus speckle. The catalysed reaction is [protein]-peptidylproline (omega=180) = [protein]-peptidylproline (omega=0). Its activity is regulated as follows. Inhibited by cyclosporin A (CsA). PPIase that catalyzes the cis-trans isomerization of proline imidic peptide bonds in oligopeptides and may therefore assist protein folding. May be implicated in the folding, transport, and assembly of proteins. May play an important role in the regulation of pre-mRNA splicing. This chain is Peptidyl-prolyl cis-trans isomerase G (Ppig), found in Rattus norvegicus (Rat).